The chain runs to 174 residues: Shikimate kinase 2 (174 aa).

An ATP-binding site is contributed by 12-17; it reads GCGKTT. The Mg(2+) site is built by Thr-16 and Asp-32. Residues Asp-34, Arg-58, and Gly-79 each contribute to the substrate site. Residues 112–126 are LID domain; sequence QAAPEEDLRPTLTGK. Arg-120 serves as a coordination point for ATP. Arg-139 lines the substrate pocket.

This sequence belongs to the shikimate kinase family. AroL subfamily. Monomer. Requires Mg(2+) as cofactor.

It localises to the cytoplasm. It catalyses the reaction shikimate + ATP = 3-phosphoshikimate + ADP + H(+). Its pathway is metabolic intermediate biosynthesis; chorismate biosynthesis; chorismate from D-erythrose 4-phosphate and phosphoenolpyruvate: step 5/7. Functionally, catalyzes the specific phosphorylation of the 3-hydroxyl group of shikimic acid using ATP as a cosubstrate. The chain is Shikimate kinase 2 from Escherichia coli O81 (strain ED1a).